Consider the following 663-residue polypeptide: GPI mannosyltransferase 3 (663 aa).

Basic residues predominate over residues 1-11 (MPMSARSRRSN). Residues 1–44 (MPMSARSRRSNPRLPPSPSSSSSSDAVRASPHSSPPSRLRPPSA) form a disordered region. Residues 19 to 42 (SSSSSSDAVRASPHSSPPSRLRPP) show a composition bias toward low complexity. 8 helical membrane-spanning segments follow: residues 47 to 67 (DVSS…ALTV), 110 to 130 (PLIF…LGLT), 137 to 157 (LLIA…DFYT), 226 to 246 (VLAV…FPPL), 269 to 289 (YASQ…LVGL), 304 to 324 (GSIL…LSVI), 335 to 355 (LLPA…IPAL), and 367 to 387 (LTLI…TLFH). The disordered stretch occupies residues 492–512 (HIPRRPSYATPPSSQRQPTQL). The span at 501–511 (TPPSSQRQPTQ) shows a compositional bias: polar residues.

This sequence belongs to the glycosyltransferase 22 family. PIGB subfamily.

It is found in the endoplasmic reticulum membrane. It participates in glycolipid biosynthesis; glycosylphosphatidylinositol-anchor biosynthesis. Its function is as follows. Mannosyltransferase involved in glycosylphosphatidylinositol-anchor biosynthesis. Transfers the third mannose to Man2-GlcN-acyl-PI during GPI precursor assembly. This chain is GPI mannosyltransferase 3 (gpi10), found in Emericella nidulans (strain FGSC A4 / ATCC 38163 / CBS 112.46 / NRRL 194 / M139) (Aspergillus nidulans).